Consider the following 2217-residue polypeptide: Protein irg-7 (2217 aa).

A signal peptide spans Met-1–Ala-16. EGF-like domains are found at residues Ser-370–Gln-405 and Thr-864–Glu-896. Cystine bridges form between Cys-379-Cys-393, Cys-395-Cys-404, Cys-868-Cys-873, Cys-886-Cys-895, Cys-1212-Cys-1312, Cys-1285-Cys-1304, Cys-1508-Cys-1521, and Cys-1523-Cys-1532. One can recognise a C-type lectin domain in the interval Ile-1188–Gln-1313. In terms of domain architecture, EGF-like 3 spans Thr-1499–Gln-1533. Residues Asp-2016–Leu-2202 form the VWFA domain.

It localises to the secreted. Its function is as follows. Plays a role in innate immunity, probably via the atf-7 pathway, to confer resistance to pathogenic bacteria. May also play a role in the regulation of longevity. The polypeptide is Protein irg-7 (Caenorhabditis elegans).